Here is a 241-residue protein sequence, read N- to C-terminus: Phosphatidylcholine synthase (241 aa).

Residues 1-15 (MKIFNYKRVPYAEIR) lie on the Cytoplasmic side of the membrane. A helical transmembrane segment spans residues 16–36 (AFSVHILTASGSFLAFLGVVA). Residues 37 to 41 (ASEHR) are Periplasmic-facing. The chain crosses the membrane as a helical span at residues 42–62 (FVDMFWWLGLALLVDGIDGPI). Residues 63-76 (ARKVRVKEVLPNWS) lie on the Cytoplasmic side of the membrane. The helical transmembrane segment at 77–97 (GDTLDNIIDYVTYVLLPAFAL) threads the bilayer. At 98–100 (YQS) the chain is on the periplasmic side. Residues 101 to 121 (GMIGEPLSFVAAGMIVVSSAI) traverse the membrane as a helical segment. The Cytoplasmic segment spans residues 122-133 (YYADMGMKTDEY). A helical transmembrane segment spans residues 134–154 (FFSGFPVVWNMVVFTLFVMDA). Over 155–159 (SATTA) the chain is Periplasmic. A helical membrane pass occupies residues 160-180 (MTVVTVSVFLTFLPINFLHPV). Residues 181-187 (RVKRLRP) lie on the Cytoplasmic side of the membrane. A helical membrane pass occupies residues 188-208 (LNLLVVAIWCALGGYALLMHF). Topologically, residues 209 to 214 (ETPTWA) are periplasmic. A helical transmembrane segment spans residues 215–235 (VIAFVASGIYLYCIGGILQFF). The Cytoplasmic segment spans residues 236–241 (PSLGAK).

This sequence belongs to the CDP-alcohol phosphatidyltransferase class-I family. Requires Mn(2+) as cofactor.

It localises to the cell inner membrane. It catalyses the reaction a CDP-1,2-diacyl-sn-glycerol + choline = a 1,2-diacyl-sn-glycero-3-phosphocholine + CMP + H(+). Condenses choline with CDP-diglyceride to produce phosphatidylcholine and CMP. Affects motility, biofilm formation and virulence of this bacterium when there is a complete loss of phosphatidylcholine formation due to absence of both the synthase (pcs) and the methylation (pmtA) pathways. The protein is Phosphatidylcholine synthase of Agrobacterium fabrum (strain C58 / ATCC 33970) (Agrobacterium tumefaciens (strain C58)).